A 441-amino-acid chain; its full sequence is Carbohydrate sulfotransferase 3 (441 aa).

The Cytoplasmic portion of the chain corresponds to 1–4 (MKMR). A helical; Signal-anchor for type II membrane protein transmembrane segment spans residues 5–21 (SKYAIILFFVVALVIIE). At 22–441 (KERNIISRVS…LLENRNFWIT (420 aa)) the chain is on the lumenal side. Asn-47 and Asn-58 each carry an N-linked (GlcNAc...) asparagine glycan. 106 to 112 (TRTGSSF) provides a ligand contact to 3'-phosphoadenylyl sulfate. Asn-221 carries N-linked (GlcNAc...) asparagine glycosylation. 266–274 (RDPRAVLAS) contributes to the 3'-phosphoadenylyl sulfate binding site. Asn-427 is a glycosylation site (N-linked (GlcNAc...) asparagine).

This sequence belongs to the sulfotransferase 1 family. Gal/GlcNAc/GalNAc subfamily. Post-translationally, N-glycosylated. In electric organ, it is moderately expressed in spinal cord and electric lobe and undetectable in non-neural tissues. Expressed in a punctate distribution in the innervated portion of electrocytes. In the CNS, it is localized within the somas of motor neurons and neurons of the electromotor nucleus.

It is found in the golgi apparatus membrane. It catalyses the reaction chondroitin beta-D-glucuronate + n 3'-phosphoadenylyl sulfate = chondroitin 6'-sulfate + n adenosine 3',5'-bisphosphate + n H(+). It carries out the reaction 3'-phosphoadenylyl sulfate + keratan = adenosine 3',5'-bisphosphate + keratan 6'-sulfate.. Sulfotransferase that utilizes 3'-phospho-5'-adenylyl sulfate (PAPS) as sulfonate donor to catalyze the transfer of sulfate to position 6 of the N-acetylgalactosamine (GalNAc) residue of chondroitin. Chondroitin sulfate constitutes the predominant proteoglycan present in cartilage and is distributed on the surfaces of many cells and extracellular matrices. Catalyzes with a lower efficiency the sulfation of Gal residues of keratan sulfate, another glycosaminoglycan. Can also catalyze the sulfation of the Gal residues in sialyl N-acetyllactosamine (sialyl LacNAc) oligosaccharides. This chain is Carbohydrate sulfotransferase 3 (CHST3), found in Tetronarce californica (Pacific electric ray).